Here is a 263-residue protein sequence, read N- to C-terminus: Mannose-specific lectin 2 (263 aa).

Positions 1 to 24 are cleaved as a signal peptide; it reads MAKSLVLSSLLLALLLAAPLASLA. Bulb-type lectin domains lie at 26–136 and 150–260; these read NNVL…APNR and RNVL…SSAS. 2 disulfide bridges follow: C54/C76 and C178/C203.

In terms of assembly, heterotetramer of 2 domain 1 and 2 domain 2 chains arranged as a dimer of domain 1/domain 2 heterodimers.

Mannose-specific lectin. Has weak agglutinating activity towards trypsin-treated erythrocytes from rabbit but not from human. This is Mannose-specific lectin 2 from Crocus vernus (Dutch crocus).